Reading from the N-terminus, the 131-residue chain is uncharacterized protein (131 aa).

This is an uncharacterized protein from Escherichia coli.